A 245-amino-acid chain; its full sequence is High affinity immunoglobulin epsilon receptor subunit alpha (245 aa).

The N-terminal stretch at 1–23 (MDTGGSARLCLALVLISLGVMLT) is a signal peptide. Topologically, residues 24–204 (ATQKSVVSLD…DYTIEYRWLQ (181 aa)) are extracellular. 2 consecutive Ig-like domains span residues 28-103 (SVVS…KPVY) and 113-181 (LQSS…LNKV). C49 and C91 are oxidised to a cystine. 7 N-linked (GlcNAc...) asparagine glycosylation sites follow: N52, N53, N58, N65, N123, N158, and N167. C130 and C174 are joined by a disulfide. A helical membrane pass occupies residues 205 to 223 (LIFPSLAVILFAVDTGLWF). Residues 224–245 (STHKQFESILKIQKTGKGKKKG) lie on the Cytoplasmic side of the membrane.

As to quaternary structure, tetramer of an alpha chain, a beta chain, and two disulfide linked gamma chains. Interacts with IGHE (via CH3 region). As to expression, expressed in leukocytes and pinealocytes at night (at protein level).

The protein resides in the cell membrane. It localises to the secreted. Its function is as follows. High-affinity receptor for immunoglobulin epsilon/IgE. Mediates IgE effector functions in myeloid cells. Upon IgE binding and antigen/allergen cross-linking initiates signaling pathways that lead to myeloid cell activation and differentiation. On mast cells, basophils and eosinophils stimulates the secretion of vasoactive amines, lipid mediators and cytokines that contribute to inflammatory response, tissue remodeling and cytotoxicity against microbes. Triggers the immediate hypersensitivity response to allergens as a host defense mechanism against helminth parasites, pathogenic bacteria and venom toxicity. When dysregulated, it can elicit harmful life-threatening allergic and anaphylactic reactions. The sequence is that of High affinity immunoglobulin epsilon receptor subunit alpha (Fcer1a) from Rattus norvegicus (Rat).